We begin with the raw amino-acid sequence, 295 residues long: Probable WRKY transcription factor 46 (295 aa).

The segment at residues 98 to 166 (QENGSIDDGH…YLGNHTCNNI (69 aa)) is a DNA-binding region (WRKY).

Belongs to the WRKY group III family. Binds to BZR2/BES1 to cooperatively regulate the expression of target genes. In terms of processing, phosphorylated and destabilized by ASK7/BIN2. In terms of tissue distribution, expressed in guard cells, hypocotyls, and in the vascular tissues of cotyledon and root. Mostly expressed in roots, at lower levels in leaves and petioles, and, to a lower extent, in stems, flowers and siliques.

Its subcellular location is the nucleus. Transcription factor involved in the regulation of osmotic stress responses and stomatal movement. Interacts specifically with the W box (5'-(T)TGAC[CT]-3'), a frequently occurring elicitor-responsive cis-acting element. Positive regulator of EDS1-dependent defense against E.amylovora. Together with WRKY70 and WRKY53, promotes resistance to P.syringae, probably by enhancing salicylic acid (SA)- dependent genes. Contributes to the suppression of jasmonic acid (MeJA)-induced expression of PDF1.2. Together with WRKY54 and WRKY70, promotes brassinosteroid (BR)-regulated plant growth but prevent drought response by modulating gene expression. The protein is Probable WRKY transcription factor 46 (WRKY46) of Arabidopsis thaliana (Mouse-ear cress).